Consider the following 613-residue polypeptide: MSDLKRSLSEAAAAAFQAAGLSPDFGRVTASDRPDLADFQCNGALAAAKSAKRNPREIAVQVVDVLKADPRLASVEIAGVGFINMRVSTDALSIRANEIAADPRAGAEPLAHPRRVLVDYAGPNVAKPMHVGHLRASIIGESVKRLYRFRGDDVVGDAHFGDWGFQMGLLISAIMEEDAFIRALLERLVEAPREFSKADEDKVMSEFAQRVTLDDLDRLYPAASARQKEDPEFKEKARKATAELQNGRFGYRLLWRHFVNISRVALEREFHALGVDFDLWKGESDVQDLIAPMVRQLEVKGLLVDDQGARIVRVARPGETKKKKLPDGSVVEVESPDPLLVVSSEGSAMYGTTDLATILDRRKSFDPHLILYCVDQRQADHFEQVFRAAYLAGYAEPGSLEHIGFGTMNGSDGKPFKTRAGGVLKLHDLIEMAREKARERLREAGLGAELSQEAFEETAHKVGIAALKFADLQNFRGTSYVFDLDRFTSFEGKTGPYLLYQSVRIKSILRKAAEQKVVSGAIIVGEPAERDLTLLLDAFEGALSEAYDKKAPNFIAEHAYKLAQTFSKFYAACPILSADNDATRASRLALAETTLKQLELALDLLGIEAPERM.

Residues 123-133 carry the 'HIGH' region motif; it reads PNVAKPMHVGH.

Belongs to the class-I aminoacyl-tRNA synthetase family. In terms of assembly, monomer.

The protein resides in the cytoplasm. The enzyme catalyses tRNA(Arg) + L-arginine + ATP = L-arginyl-tRNA(Arg) + AMP + diphosphate. This Caulobacter sp. (strain K31) protein is Arginine--tRNA ligase.